The sequence spans 283 residues: Protein boule-like (283 aa).

Residues 1–25 (MQTDSLSPSPNPVSPVPLNNPTSAP) form a disordered region. The RRM domain maps to 33-110 (NRIFVGGIDF…KKLNIGPAIR (78 aa)). Residues 160–184 (PSRSVCSSPVMVAQPIYQQPAYHYQ) form the DAZ domain.

This sequence belongs to the RRM DAZ family. Interacts with DAZ1 and DAZL.

The protein resides in the cytoplasm. In terms of biological role, probable RNA-binding protein, which may be required during spermatogenesis. May act by binding to the 3'-UTR of mRNAs and regulating their translation. In Macaca fascicularis (Crab-eating macaque), this protein is Protein boule-like (BOLL).